A 369-amino-acid polypeptide reads, in one-letter code: Peptide chain release factor 1 (369 aa).

Position 238 is an N5-methylglutamine (Gln238).

Belongs to the prokaryotic/mitochondrial release factor family. Post-translationally, methylated by PrmC. Methylation increases the termination efficiency of RF1.

It is found in the cytoplasm. Peptide chain release factor 1 directs the termination of translation in response to the peptide chain termination codons UAG and UAA. The chain is Peptide chain release factor 1 from Parabacteroides distasonis (strain ATCC 8503 / DSM 20701 / CIP 104284 / JCM 5825 / NCTC 11152).